Here is a 66-residue protein sequence, read N- to C-terminus: Large ribosomal subunit protein bL28 (66 aa).

Positions 1–26 (MAKDAITGARTRFGNQRSHALNSSRR) are disordered. Over residues 13-25 (FGNQRSHALNSSR) the composition is skewed to polar residues.

The protein belongs to the bacterial ribosomal protein bL28 family.

The protein is Large ribosomal subunit protein bL28 of Leuconostoc citreum (strain KM20).